A 237-amino-acid polypeptide reads, in one-letter code: Cuticlin-like protein 19 (237 aa).

Positions 1–20 (MVEYNRIFCVLVIFSTTIKC) are cleaved as a signal peptide.

As to quaternary structure, interacts with vps-51 and vps-52. Expression detected in motor neurons.

It localises to the golgi apparatus. It is found in the trans-Golgi network. The polypeptide is Cuticlin-like protein 19 (cutl-19) (Caenorhabditis elegans).